Here is a 367-residue protein sequence, read N- to C-terminus: Gibberellin 20 oxidase 3 (367 aa).

The 107-residue stretch at 198 to 304 folds into the Fe2OG dioxygenase domain; the sequence is DGDPVMRLNH…RRSLTFFLNP (107 aa). Residue Tyr-208 participates in 2-oxoglutarate binding. Residues His-223, Asp-225, and His-285 each contribute to the Fe cation site. 2-oxoglutarate-binding residues include Arg-295 and Ser-297.

This sequence belongs to the iron/ascorbate-dependent oxidoreductase family. The cofactor is Fe(2+). L-ascorbate serves as cofactor.

It carries out the reaction gibberellin A12 + 2 2-oxoglutarate + 3 O2 + H(+) = gibberellin A9 + 2 succinate + 3 CO2 + 2 H2O. The catalysed reaction is gibberellin A53 + 2 2-oxoglutarate + 3 O2 + H(+) = gibberellin A20 + 2 succinate + 3 CO2 + 2 H2O. In terms of biological role, key oxidase enzyme in the biosynthesis of gibberellin. Catalyzes the formation of bioactive gibberellins (GAs) via a three-step oxidation at C-20 of the GA skeleton. Controls the elongation of the vegetative shoot and plant height by the regulation of active gibberellin levels. This is Gibberellin 20 oxidase 3 from Oryza sativa subsp. japonica (Rice).